A 303-amino-acid polypeptide reads, in one-letter code: Probable alpha-L-glutamate ligase (303 aa).

One can recognise an ATP-grasp domain in the interval 104-287 (LQLLAREGID…IAGMMIEFIE (184 aa)). ATP is bound by residues Lys141, 178 to 179 (EY), Asp187, and 211 to 213 (RSN). 3 residues coordinate Mg(2+): Asp248, Glu260, and Asn262. Mn(2+) is bound by residues Asp248, Glu260, and Asn262.

This sequence belongs to the RimK family. Requires Mg(2+) as cofactor. It depends on Mn(2+) as a cofactor.

The sequence is that of Probable alpha-L-glutamate ligase from Pectobacterium carotovorum subsp. carotovorum (strain PC1).